We begin with the raw amino-acid sequence, 115 residues long: T cell receptor beta variable 11-3 (115 aa).

The N-terminal stretch at 1 to 21 (MGTRLLCWVAFCLLVEELIEA) is a signal peptide. Positions 22-115 (GVVQSPRYKI…SAVYLCASSL (94 aa)) constitute an Ig-like domain. A disulfide bridge links Cys42 with Cys111.

Alpha-beta TR is a heterodimer composed of an alpha and beta chain; disulfide-linked. The alpha-beta TR is associated with the transmembrane signaling CD3 coreceptor proteins to form the TR-CD3 (TcR or TCR). The assembly of alpha-beta TR heterodimers with CD3 occurs in the endoplasmic reticulum where a single alpha-beta TR heterodimer associates with one CD3D-CD3E heterodimer, one CD3G-CD3E heterodimer and one CD247 homodimer forming a stable octameric structure. CD3D-CD3E and CD3G-CD3E heterodimers preferentially associate with TR alpha and TR beta chains, respectively. The association of the CD247 homodimer is the last step of TcR assembly in the endoplasmic reticulum and is required for transport to the cell surface.

The protein resides in the cell membrane. Its function is as follows. V region of the variable domain of T cell receptor (TR) beta chain that participates in the antigen recognition. Alpha-beta T cell receptors are antigen specific receptors which are essential to the immune response and are present on the cell surface of T lymphocytes. Recognize peptide-major histocompatibility (MH) (pMH) complexes that are displayed by antigen presenting cells (APC), a prerequisite for efficient T cell adaptive immunity against pathogens. Binding of alpha-beta TR to pMH complex initiates TR-CD3 clustering on the cell surface and intracellular activation of LCK that phosphorylates the ITAM motifs of CD3G, CD3D, CD3E and CD247 enabling the recruitment of ZAP70. In turn ZAP70 phosphorylates LAT, which recruits numerous signaling molecules to form the LAT signalosome. The LAT signalosome propagates signal branching to three major signaling pathways, the calcium, the mitogen-activated protein kinase (MAPK) kinase and the nuclear factor NF-kappa-B (NF-kB) pathways, leading to the mobilization of transcription factors that are critical for gene expression and essential for T cell growth and differentiation. The T cell repertoire is generated in the thymus, by V-(D)-J rearrangement. This repertoire is then shaped by intrathymic selection events to generate a peripheral T cell pool of self-MH restricted, non-autoaggressive T cells. Post-thymic interaction of alpha-beta TR with the pMH complexes shapes TR structural and functional avidity. The polypeptide is T cell receptor beta variable 11-3 (Homo sapiens (Human)).